We begin with the raw amino-acid sequence, 279 residues long: Oxygen-dependent coproporphyrinogen-III oxidase (279 aa).

S102 lines the substrate pocket. Residues H106 and H116 each contribute to the a divalent metal cation site. The Proton donor role is filled by H116. 118-120 (NTR) is a binding site for substrate. Residues H149 and H179 each coordinate a divalent metal cation. Residues 244 to 279 (YVEFNLLYDRGTKFGLMTDGNVEAILMSLPPVVKFN) are important for dimerization.

Belongs to the aerobic coproporphyrinogen-III oxidase family. As to quaternary structure, homodimer. A divalent metal cation is required as a cofactor.

It localises to the cytoplasm. It carries out the reaction coproporphyrinogen III + O2 + 2 H(+) = protoporphyrinogen IX + 2 CO2 + 2 H2O. It participates in porphyrin-containing compound metabolism; protoporphyrin-IX biosynthesis; protoporphyrinogen-IX from coproporphyrinogen-III (O2 route): step 1/1. Functionally, involved in the heme biosynthesis. Catalyzes the aerobic oxidative decarboxylation of propionate groups of rings A and B of coproporphyrinogen-III to yield the vinyl groups in protoporphyrinogen-IX. This Rickettsia prowazekii (strain Madrid E) protein is Oxygen-dependent coproporphyrinogen-III oxidase.